A 351-amino-acid polypeptide reads, in one-letter code: Fruit bromelain (351 aa).

An N-terminal signal peptide occupies residues 1-24 (MASKVQLVFLFLFLCAMWASPSAA). A propeptide spans 25 to 121 (SRDEPNDPMM…VVSFDDVNIS (97 aa)) (activation peptide). Asparagine 119 carries an N-linked (GlcNAc...) asparagine glycan. 3 disulfides stabilise this stretch: cysteine 144–cysteine 184, cysteine 178–cysteine 217, and cysteine 273–cysteine 325. Cysteine 147 is a catalytic residue. Catalysis depends on residues histidine 279 and asparagine 300.

It belongs to the peptidase C1 family.

It carries out the reaction Hydrolysis of proteins with broad specificity for peptide bonds. Bz-Phe-Val-Arg-|-NHMec is a good synthetic substrate, but there is no action on Z-Arg-Arg-|-NHMec (cf. stem bromelain).. Functionally, cysteine proteinase with a high level of diversity in substrate specificity. This chain is Fruit bromelain, found in Ananas comosus (Pineapple).